We begin with the raw amino-acid sequence, 533 residues long: D-3-phosphoglycerate dehydrogenase (533 aa).

Ala-2 carries the post-translational modification N-acetylalanine. Residue Ser-14 is modified to Phosphoserine. Lys-21 is modified (N6-acetyllysine; alternate). Lys-21 is covalently cross-linked (Glycyl lysine isopeptide (Lys-Gly) (interchain with G-Cter in SUMO1); alternate). A Glycyl lysine isopeptide (Lys-Gly) (interchain with G-Cter in SUMO2); alternate cross-link involves residue Lys-21. The residue at position 58 (Lys-58) is an N6-acetyllysine. NAD(+)-binding positions include Thr-78, 155 to 156, Asp-175, Thr-207, 234 to 236, and Asp-260; these read RI and CAR. Thr-78 is modified (phosphothreonine). Arg-236 is a catalytic residue. Glu-265 is a catalytic residue. His-283 (proton donor) is an active-site residue. Residue 283–286 participates in NAD(+) binding; that stretch reads HLGA.

It belongs to the D-isomer specific 2-hydroxyacid dehydrogenase family. In terms of assembly, homotetramer.

It carries out the reaction (2R)-3-phosphoglycerate + NAD(+) = 3-phosphooxypyruvate + NADH + H(+). It catalyses the reaction (R)-2-hydroxyglutarate + NAD(+) = 2-oxoglutarate + NADH + H(+). The catalysed reaction is (S)-malate + NAD(+) = oxaloacetate + NADH + H(+). Its pathway is amino-acid biosynthesis; L-serine biosynthesis; L-serine from 3-phospho-D-glycerate: step 1/3. Its function is as follows. Catalyzes the reversible oxidation of 3-phospho-D-glycerate to 3-phosphonooxypyruvate, the first step of the phosphorylated L-serine biosynthesis pathway. Also catalyzes the reversible oxidation of 2-hydroxyglutarate to 2-oxoglutarate and the reversible oxidation of (S)-malate to oxaloacetate. In Homo sapiens (Human), this protein is D-3-phosphoglycerate dehydrogenase (PHGDH).